A 371-amino-acid polypeptide reads, in one-letter code: Thyroid transcription factor 1 (371 aa).

A DNA-binding region (homeobox) is located at residues 161–220; it reads RRKRRVLFSQAQVYELERRFKQQKYLSAPEREHLASMIHLTPTQVKIWFQNHRYKMKRQA. 2 disordered regions span residues 219–294 and 308–342; these read QAKD…QQQA and SGGP…ALQG. Residues 233–243 are compositionally biased toward gly residues; that stretch reads SGGGGGGGGAG. Low complexity-rich tracts occupy residues 244 to 253 and 272 to 294; these read CPQQQQAQQQ and AGAP…QQQA.

It belongs to the NK-2 homeobox family. Phosphorylated on serine residues. As to expression, thyroid, lung and CNS.

It localises to the nucleus. Functionally, transcription factor that binds and activates the promoter of thyroid specific genes such as thyroglobulin, thyroperoxidase, and thyrotropin receptor. Crucial in the maintenance of the thyroid differentiation phenotype. May play a role in lung development and surfactant homeostasis. The protein is Thyroid transcription factor 1 (TITF1) of Canis lupus familiaris (Dog).